The chain runs to 655 residues: MDIFSIANQHIRFAVKLATAIVLALFVGFHFQLETPRWAVLTAAIVAAGPAFAAGGEPYSGAIRYRGFLRIIGTFIGCIAGLVIIIAMIRAPLLMILVCCIWAGFCTWISSLVRIENSYAWGLAGYTALIIVITIQPEPLLTPQFAVERCSEIVIGIVCAIMADLLFSPRSIKQEVDRELESLLVAQYQLMQLCIKHGDGEVVDKAWGDLVRRTTALQGMRSNLNMESSRWARANRRLKAINTLSLTLITQSCETYLIQNTRPELITDTFREFFDTPVETAQDVHKQLKRLRRVIAWTGERETPVTIYSWVAAATRYQLLKRGVISNTKINATEEEILQGEPEVKVESAERHHAMVNFWRTTLSCILGTLFWLWTGWTSGSGAMVMIAVVTSLAMRLPNPRMVAIDFIYGTLAALPLGLLYFLVIIPNTQQSMLLLCISLAVLGFFLGIEVQKRRLGSMGALASTINIIVLDNPMTFHFSQFLDSALGQIVGCVLAFTVILLVRDKSRDRTGRVLLNQFVSAAVSAMTTNVARRKENHLPALYQQLFLLMNKFPGDLPKFRLALTMIIAHQRLRDAPIPVNEDLSAFHRQMRRTADHVISARSDDKRRRYFGQLLEELEIYQEKLCIWQAPPQVTEPVHRLAGMLHKYQHALTDS.

Over 1-12 the chain is Periplasmic; sequence MDIFSIANQHIR. A helical membrane pass occupies residues 13-33; it reads FAVKLATAIVLALFVGFHFQL. Topologically, residues 34 to 37 are cytoplasmic; sequence ETPR. The chain crosses the membrane as a helical span at residues 38–58; sequence WAVLTAAIVAAGPAFAAGGEP. The Periplasmic segment spans residues 59–68; sequence YSGAIRYRGF. A helical transmembrane segment spans residues 69-89; the sequence is LRIIGTFIGCIAGLVIIIAMI. At 90 to 92 the chain is on the cytoplasmic side; it reads RAP. A helical membrane pass occupies residues 93-113; it reads LLMILVCCIWAGFCTWISSLV. The Periplasmic portion of the chain corresponds to 114–120; sequence RIENSYA. A helical membrane pass occupies residues 121–141; the sequence is WGLAGYTALIIVITIQPEPLL. Residues 142–151 lie on the Cytoplasmic side of the membrane; sequence TPQFAVERCS. The chain crosses the membrane as a helical span at residues 152-172; sequence EIVIGIVCAIMADLLFSPRSI. Residues 173 to 369 lie on the Periplasmic side of the membrane; sequence KQEVDRELES…RTTLSCILGT (197 aa). A helical transmembrane segment spans residues 370–390; that stretch reads LFWLWTGWTSGSGAMVMIAVV. The Cytoplasmic segment spans residues 391 to 406; that stretch reads TSLAMRLPNPRMVAID. The helical transmembrane segment at 407 to 427 threads the bilayer; that stretch reads FIYGTLAALPLGLLYFLVIIP. Residues 428–430 are Periplasmic-facing; the sequence is NTQ. The chain crosses the membrane as a helical span at residues 431 to 451; that stretch reads QSMLLLCISLAVLGFFLGIEV. Residues 452–458 lie on the Cytoplasmic side of the membrane; it reads QKRRLGS. The helical transmembrane segment at 459 to 479 threads the bilayer; it reads MGALASTINIIVLDNPMTFHF. Residues 480 to 481 are Periplasmic-facing; it reads SQ. The chain crosses the membrane as a helical span at residues 482-502; that stretch reads FLDSALGQIVGCVLAFTVILL. Residues 503–655 lie on the Cytoplasmic side of the membrane; sequence VRDKSRDRTG…HKYQHALTDS (153 aa).

This sequence belongs to the aromatic acid exporter ArAE (TC 2.A.85) family.

The protein localises to the cell inner membrane. Functionally, forms an efflux pump with AaeA. Could function as a metabolic relief valve, allowing to eliminate certain compounds when they accumulate to high levels in the cell. The protein is p-hydroxybenzoic acid efflux pump subunit AaeB of Escherichia coli O157:H7.